Consider the following 704-residue polypeptide: Ion-translocating oxidoreductase complex subunit C (704 aa).

2 4Fe-4S ferredoxin-type domains span residues M368–Y397 and K407–F436. [4Fe-4S] cluster contacts are provided by C377, C380, C383, C387, C416, C419, C422, and C426. The disordered stretch occupies residues R536–A685. Positions K556–R565 are enriched in low complexity.

The protein belongs to the 4Fe4S bacterial-type ferredoxin family. RnfC subfamily. In terms of assembly, the complex is composed of six subunits: RsxA, RsxB, RsxC, RsxD, RsxE and RsxG. Requires [4Fe-4S] cluster as cofactor.

Its subcellular location is the cell inner membrane. Functionally, part of a membrane-bound complex that couples electron transfer with translocation of ions across the membrane. Required to maintain the reduced state of SoxR. This Salmonella dublin (strain CT_02021853) protein is Ion-translocating oxidoreductase complex subunit C.